The sequence spans 139 residues: D-ribose pyranase (139 aa).

His20 functions as the Proton donor in the catalytic mechanism. Substrate contacts are provided by residues Asp28, His106, and 128-130 (YAN).

This sequence belongs to the RbsD / FucU family. RbsD subfamily. In terms of assembly, homodecamer.

The protein resides in the cytoplasm. The enzyme catalyses beta-D-ribopyranose = beta-D-ribofuranose. Its pathway is carbohydrate metabolism; D-ribose degradation; D-ribose 5-phosphate from beta-D-ribopyranose: step 1/2. Its function is as follows. Catalyzes the interconversion of beta-pyran and beta-furan forms of D-ribose. In Cronobacter sakazakii (strain ATCC BAA-894) (Enterobacter sakazakii), this protein is D-ribose pyranase.